The chain runs to 435 residues: Glutamyl-tRNA reductase (435 aa).

Residues threonine 49 to arginine 52, serine 118, glutamate 123 to glutamine 125, and glutamine 129 each bind substrate. The Nucleophile role is filled by cysteine 50. Position 203-208 (glycine 203–isoleucine 208) interacts with NADP(+).

It belongs to the glutamyl-tRNA reductase family. In terms of assembly, homodimer.

The catalysed reaction is (S)-4-amino-5-oxopentanoate + tRNA(Glu) + NADP(+) = L-glutamyl-tRNA(Glu) + NADPH + H(+). Its pathway is porphyrin-containing compound metabolism; protoporphyrin-IX biosynthesis; 5-aminolevulinate from L-glutamyl-tRNA(Glu): step 1/2. Functionally, catalyzes the NADPH-dependent reduction of glutamyl-tRNA(Glu) to glutamate 1-semialdehyde (GSA). This is Glutamyl-tRNA reductase from Glaesserella parasuis serovar 5 (strain SH0165) (Haemophilus parasuis).